Consider the following 293-residue polypeptide: Adenylyl-sulfate kinase 2, chloroplastic (293 aa).

The N-terminal 59 residues, 1–59 (MEGLAIRASRPSVFCSIPGLGGDSHRKPPSDGFLKLPASSIPADSRKLVANSTSFHPIS), are a transit peptide targeting the chloroplast. An ATP-binding site is contributed by 122 to 130 (GLSGSGKST). Residues aspartate 152, arginine 155, arginine 169, asparagine 172, 195–196 (IS), and glycine 245 contribute to the substrate site. Catalysis depends on serine 196, which acts as the Phosphoserine intermediate.

The protein belongs to the APS kinase family. As to quaternary structure, interacts with APK1. Expressed in root vasculature, root tips, leaf epidermal cells and funiculus of developing seeds.

The protein localises to the plastid. Its subcellular location is the chloroplast. It catalyses the reaction adenosine 5'-phosphosulfate + ATP = 3'-phosphoadenylyl sulfate + ADP + H(+). It participates in sulfur metabolism; hydrogen sulfide biosynthesis; sulfite from sulfate: step 2/3. Catalyzes the synthesis of activated sulfate. Essential for plant reproduction and viability. Required for the production of glucosinolates. The chain is Adenylyl-sulfate kinase 2, chloroplastic (APK2) from Arabidopsis thaliana (Mouse-ear cress).